A 240-amino-acid chain; its full sequence is Cilia- and flagella-associated protein 77 (240 aa).

Belongs to the CFAP77 family.

The protein resides in the cytoplasm. The protein localises to the cytoskeleton. It localises to the cilium axoneme. Its subcellular location is the flagellum axoneme. Functionally, microtubule inner protein (MIP) part of the dynein-decorated doublet microtubules (DMTs) in cilia axoneme, which is required for motile cilia beating. The protein is Cilia- and flagella-associated protein 77 of Danio rerio (Zebrafish).